A 339-amino-acid polypeptide reads, in one-letter code: Protein LicA (339 aa).

9 repeat units span residues 4 to 7 (INQS), 8 to 11 (INQS), 12 to 15 (INQS), 16 to 19 (INQS), 20 to 23 (INQS), 24 to 27 (INQS), 28 to 31 (INQS), 32 to 35 (INQS), and 36 to 39 (INQS). Residues 4 to 39 (INQSINQSINQSINQSINQSINQSINQSINQSINQS) are 9 X 4 AA tandem repeats of I-N-Q-S.

This sequence belongs to the peptidase S49 family.

Functionally, mediates phase variation of the LOS 6A2 and 12D9 epitopes. Phase variation of H.influenza LOS epitopes expressed by LicA is determined by a translational switch. The chain is Protein LicA (licA) from Haemophilus influenzae.